Reading from the N-terminus, the 195-residue chain is NADH-quinone oxidoreductase subunit B (195 aa).

The [4Fe-4S] cluster site is built by C74, C75, C139, and C169.

This sequence belongs to the complex I 20 kDa subunit family. As to quaternary structure, NDH-1 is composed of 14 different subunits. Subunits NuoB, C, D, E, F, and G constitute the peripheral sector of the complex. [4Fe-4S] cluster serves as cofactor.

The protein resides in the cell inner membrane. It carries out the reaction a quinone + NADH + 5 H(+)(in) = a quinol + NAD(+) + 4 H(+)(out). Functionally, NDH-1 shuttles electrons from NADH, via FMN and iron-sulfur (Fe-S) centers, to quinones in the respiratory chain. The immediate electron acceptor for the enzyme in this species is believed to be ubiquinone. Couples the redox reaction to proton translocation (for every two electrons transferred, four hydrogen ions are translocated across the cytoplasmic membrane), and thus conserves the redox energy in a proton gradient. In Methylorubrum populi (strain ATCC BAA-705 / NCIMB 13946 / BJ001) (Methylobacterium populi), this protein is NADH-quinone oxidoreductase subunit B.